A 249-amino-acid polypeptide reads, in one-letter code: Ubiquinone/menaquinone biosynthesis C-methyltransferase UbiE (249 aa).

Residues T72, D93, and 121 to 122 (NA) each bind S-adenosyl-L-methionine.

The protein belongs to the class I-like SAM-binding methyltransferase superfamily. MenG/UbiE family.

The enzyme catalyses a 2-demethylmenaquinol + S-adenosyl-L-methionine = a menaquinol + S-adenosyl-L-homocysteine + H(+). The catalysed reaction is a 2-methoxy-6-(all-trans-polyprenyl)benzene-1,4-diol + S-adenosyl-L-methionine = a 5-methoxy-2-methyl-3-(all-trans-polyprenyl)benzene-1,4-diol + S-adenosyl-L-homocysteine + H(+). Its pathway is quinol/quinone metabolism; menaquinone biosynthesis; menaquinol from 1,4-dihydroxy-2-naphthoate: step 2/2. It participates in cofactor biosynthesis; ubiquinone biosynthesis. In terms of biological role, methyltransferase required for the conversion of demethylmenaquinol (DMKH2) to menaquinol (MKH2) and the conversion of 2-polyprenyl-6-methoxy-1,4-benzoquinol (DDMQH2) to 2-polyprenyl-3-methyl-6-methoxy-1,4-benzoquinol (DMQH2). This is Ubiquinone/menaquinone biosynthesis C-methyltransferase UbiE from Hahella chejuensis (strain KCTC 2396).